Reading from the N-terminus, the 322-residue chain is Cytochrome c biogenesis protein CcsA (322 aa).

Transmembrane regions (helical) follow at residues 15–35 (FSIVSIIITMRLISFFLVDGI), 45–65 (GMIVTFLCLTGLLVTRWTYSG), 72–92 (LYESLIFLSWSFSLIHIVPYF), 98–120 (YLSTITGSSVVFTQGFTTSGLLT), 144–164 (MILGYASLLCGSLLSIALLVI), 226–246 (GISLGFIFLTIGILSGAVWAN), 253–273 (WNWDPKETWAFITWIIFAIYL), and 287–307 (AIVASIGFLIIWICYFGVNLL).

Belongs to the CcmF/CycK/Ccl1/NrfE/CcsA family. As to quaternary structure, may interact with Ccs1.

Its subcellular location is the plastid. The protein localises to the chloroplast thylakoid membrane. In terms of biological role, required during biogenesis of c-type cytochromes (cytochrome c6 and cytochrome f) at the step of heme attachment. This chain is Cytochrome c biogenesis protein CcsA, found in Coffea arabica (Arabian coffee).